Consider the following 87-residue polypeptide: Small ribosomal subunit protein uS17 (87 aa).

It belongs to the universal ribosomal protein uS17 family. In terms of assembly, part of the 30S ribosomal subunit.

Its function is as follows. One of the primary rRNA binding proteins, it binds specifically to the 5'-end of 16S ribosomal RNA. This chain is Small ribosomal subunit protein uS17, found in Oceanobacillus iheyensis (strain DSM 14371 / CIP 107618 / JCM 11309 / KCTC 3954 / HTE831).